Here is a 128-residue protein sequence, read N- to C-terminus: Sulfurtransferase TusD (128 aa).

Catalysis depends on Cys-78, which acts as the Cysteine persulfide intermediate.

This sequence belongs to the DsrE/TusD family. As to quaternary structure, heterohexamer, formed by a dimer of trimers. The hexameric TusBCD complex contains 2 copies each of TusB, TusC and TusD. The TusBCD complex interacts with TusE.

It is found in the cytoplasm. In terms of biological role, part of a sulfur-relay system required for 2-thiolation of 5-methylaminomethyl-2-thiouridine (mnm(5)s(2)U) at tRNA wobble positions. Accepts sulfur from TusA and transfers it in turn to TusE. The protein is Sulfurtransferase TusD of Escherichia coli O45:K1 (strain S88 / ExPEC).